A 269-amino-acid chain; its full sequence is Energy-coupling factor transporter ATP-binding protein EcfA1 (269 aa).

In terms of domain architecture, ABC transporter spans 8 to 242 (IVFKNVSFQY…AEELTTIGLD (235 aa)). ATP is bound at residue 42–49 (GHNGSGKS).

This sequence belongs to the ABC transporter superfamily. Energy-coupling factor EcfA family. As to quaternary structure, forms a stable energy-coupling factor (ECF) transporter complex composed of 2 membrane-embedded substrate-binding proteins (S component), 2 ATP-binding proteins (A component) and 2 transmembrane proteins (T component).

The protein resides in the cell membrane. Functionally, ATP-binding (A) component of a common energy-coupling factor (ECF) ABC-transporter complex. Unlike classic ABC transporters this ECF transporter provides the energy necessary to transport a number of different substrates. The protein is Energy-coupling factor transporter ATP-binding protein EcfA1 of Staphylococcus aureus (strain MSSA476).